The sequence spans 312 residues: uncharacterized protein (312 aa).

Basic and acidic residues-rich tracts occupy residues 1–17 and 28–39; these read MAKY…EQLE and PDRDGPRHSAKL. Residues 1-39 form a disordered region; sequence MAKYDHLELVRLPEQLERRKHGGGSPPPDRDGPRHSAKL.

This is an uncharacterized protein from Sinorhizobium fredii (strain NBRC 101917 / NGR234).